The chain runs to 852 residues: Nucleolar protein 14 homolog (852 aa).

A disordered region spans residues M1–D40. Residues R20 to R35 show a composition bias toward polar residues. Residues I190–N221 are a coiled coil. 2 disordered regions span residues R288–D324 and L338–D410. Residues G344–D353 show a composition bias toward basic and acidic residues. A compositionally biased stretch (acidic residues) spans E354–N381. The stretch at K774–K851 forms a coiled coil.

It belongs to the NOP14 family. As to quaternary structure, component of the ribosomal small subunit (SSU) processome.

Its subcellular location is the nucleus. It localises to the nucleolus. Functionally, involved in nucleolar processing of pre-18S ribosomal RNA. Has a role in the nuclear export of 40S pre-ribosomal subunit to the cytoplasm. This Drosophila melanogaster (Fruit fly) protein is Nucleolar protein 14 homolog (l(3)07882).